A 548-amino-acid chain; its full sequence is Malate:quinone oxidoreductase (548 aa).

The tract at residues 521 to 548 is disordered; the sequence is DKPQAADSTPKPQLKPQPVQKEVADIAL. Residues 530–541 show a composition bias toward low complexity; it reads PKPQLKPQPVQK.

Belongs to the MQO family. FAD serves as cofactor.

It carries out the reaction (S)-malate + a quinone = a quinol + oxaloacetate. Its pathway is carbohydrate metabolism; tricarboxylic acid cycle; oxaloacetate from (S)-malate (quinone route): step 1/1. The polypeptide is Malate:quinone oxidoreductase (mqo) (Escherichia coli (strain K12)).